The following is a 310-amino-acid chain: Ribosomal RNA small subunit methyltransferase H (310 aa).

S-adenosyl-L-methionine-binding positions include 35–37 (GGH), Asp-52, Phe-79, Asp-100, and Gln-107.

Belongs to the methyltransferase superfamily. RsmH family.

It localises to the cytoplasm. It catalyses the reaction cytidine(1402) in 16S rRNA + S-adenosyl-L-methionine = N(4)-methylcytidine(1402) in 16S rRNA + S-adenosyl-L-homocysteine + H(+). In terms of biological role, specifically methylates the N4 position of cytidine in position 1402 (C1402) of 16S rRNA. The chain is Ribosomal RNA small subunit methyltransferase H from Anaeromyxobacter sp. (strain Fw109-5).